We begin with the raw amino-acid sequence, 379 residues long: Dual-specificity RNA methyltransferase RlmN (379 aa).

E95 (proton acceptor) is an active-site residue. Residues 101–345 enclose the Radical SAM core domain; sequence EETRGTLCVS…TTVRKTRGDD (245 aa). C108 and C350 are disulfide-bonded. C115, C119, and C122 together coordinate [4Fe-4S] cluster. S-adenosyl-L-methionine-binding positions include 176–177, S208, 230–232, and N307; these read GE and SLH. The active-site S-methylcysteine intermediate is C350.

It belongs to the radical SAM superfamily. RlmN family. Requires [4Fe-4S] cluster as cofactor.

It is found in the cytoplasm. It carries out the reaction adenosine(2503) in 23S rRNA + 2 reduced [2Fe-2S]-[ferredoxin] + 2 S-adenosyl-L-methionine = 2-methyladenosine(2503) in 23S rRNA + 5'-deoxyadenosine + L-methionine + 2 oxidized [2Fe-2S]-[ferredoxin] + S-adenosyl-L-homocysteine. It catalyses the reaction adenosine(37) in tRNA + 2 reduced [2Fe-2S]-[ferredoxin] + 2 S-adenosyl-L-methionine = 2-methyladenosine(37) in tRNA + 5'-deoxyadenosine + L-methionine + 2 oxidized [2Fe-2S]-[ferredoxin] + S-adenosyl-L-homocysteine. Functionally, specifically methylates position 2 of adenine 2503 in 23S rRNA and position 2 of adenine 37 in tRNAs. m2A2503 modification seems to play a crucial role in the proofreading step occurring at the peptidyl transferase center and thus would serve to optimize ribosomal fidelity. The chain is Dual-specificity RNA methyltransferase RlmN from Burkholderia vietnamiensis (strain G4 / LMG 22486) (Burkholderia cepacia (strain R1808)).